A 174-amino-acid polypeptide reads, in one-letter code: Large ribosomal subunit protein bL12cy (174 aa).

Residues 1-45 (MASTTFSSAFSILSLPSSSPSPPPWAPRTLPVANRRRRAAAVAST) constitute a chloroplast transit peptide.

Belongs to the bacterial ribosomal protein bL12 family.

It is found in the plastid. The protein localises to the chloroplast. This chain is Large ribosomal subunit protein bL12cy (RPL12-2), found in Secale cereale (Rye).